Consider the following 33-residue polypeptide: Toxin BcV (33 aa).

Cysteines 6 and 30 form a disulfide.

Its subcellular location is the secreted. It is found in the nematocyst. Potently and reversibly blocks mammalian Kv11/KCNH/ERG voltage-gated potassium channels. Acts as a gating-modifier toxin that shifts the voltage-dependence of ERG activation in the positive direction and suppresses its current amplitudes elicited by strong depolarizing pulses that maximally activate the channels. The chain is Toxin BcV from Bunodosoma caissarum (Sea anemone).